A 429-amino-acid chain; its full sequence is Putative protease Do-like 14 (429 aa).

Positions 87 to 113 (KSEAPINDEKGVSVEASDSSSKPSNGY) are disordered. The interval 113-338 (YLGRDTIANA…IRPWIGLKMV (226 aa)) is serine protease. Residues H165, D203, and S281 each act as charge relay system in the active site. The PDZ domain occupies 318–424 (IIEHFKKSGR…RVTLEVIPEE (107 aa)).

The protein belongs to the peptidase S1C family.

In terms of biological role, putative serine protease. The sequence is that of Putative protease Do-like 14 (DEGP14) from Arabidopsis thaliana (Mouse-ear cress).